Reading from the N-terminus, the 245-residue chain is Thiopurine S-methyltransferase (245 aa).

Trp29–Phe40 contacts S-adenosyl-L-methionine. Phe40 contributes to the substrate binding site. At Lys58 the chain carries N6-acetyllysine. The S-adenosyl-L-methionine site is built by Leu69, Glu90, and Arg152.

It belongs to the class I-like SAM-binding methyltransferase superfamily. TPMT family. As to quaternary structure, monomer.

It is found in the cytoplasm. The enzyme catalyses S-adenosyl-L-methionine + a thiopurine = S-adenosyl-L-homocysteine + a thiopurine S-methylether.. This is Thiopurine S-methyltransferase (TPMT) from Bos taurus (Bovine).